Here is a 324-residue protein sequence, read N- to C-terminus: ATP-dependent 6-phosphofructokinase (324 aa).

Residue Gly15 coordinates ATP. Residue 25–29 (RGVVR) coordinates ADP. ATP contacts are provided by residues 76 to 77 (RF) and 106 to 109 (GDGS). Asp107 is a binding site for Mg(2+). 130–132 (TID) is a binding site for substrate. Catalysis depends on Asp132, which acts as the Proton acceptor. Arg159 contributes to the ADP binding site. Residues Arg167 and 174–176 (MGR) contribute to the substrate site. ADP is bound by residues 190 to 192 (GCE), Lys216, and 218 to 220 (KRH). Substrate contacts are provided by residues Glu227, Arg248, and 254 to 257 (HIQR).

It belongs to the phosphofructokinase type A (PFKA) family. ATP-dependent PFK group I subfamily. Prokaryotic clade 'B1' sub-subfamily. In terms of assembly, homotetramer. Requires Mg(2+) as cofactor.

The protein resides in the cytoplasm. The catalysed reaction is beta-D-fructose 6-phosphate + ATP = beta-D-fructose 1,6-bisphosphate + ADP + H(+). The protein operates within carbohydrate degradation; glycolysis; D-glyceraldehyde 3-phosphate and glycerone phosphate from D-glucose: step 3/4. Its activity is regulated as follows. Allosterically activated by ADP and other diphosphonucleosides, and allosterically inhibited by phosphoenolpyruvate. In terms of biological role, catalyzes the phosphorylation of D-fructose 6-phosphate to fructose 1,6-bisphosphate by ATP, the first committing step of glycolysis. The polypeptide is ATP-dependent 6-phosphofructokinase (Haemophilus ducreyi (strain 35000HP / ATCC 700724)).